We begin with the raw amino-acid sequence, 582 residues long: Choline kinase (582 aa).

Residues 1-36 (MVQESRPGSVRSYSVGYQARSRSSSQRRHSLTRQRS) are disordered. S30 carries the post-translational modification Phosphoserine; by PKA. A phosphoserine mark is found at S48 and S51. T54 bears the Phosphothreonine mark. A Phosphoserine; by PKA modification is found at S85.

Belongs to the choline/ethanolamine kinase family. Monomer. Interacts with NAP1. Mg(2+) is required as a cofactor.

The protein resides in the cytoplasm. It carries out the reaction choline + ATP = phosphocholine + ADP + H(+). It catalyses the reaction ethanolamine + ATP = phosphoethanolamine + ADP + H(+). The protein operates within phospholipid metabolism; phosphatidylcholine biosynthesis; phosphocholine from choline: step 1/1. Functionally, catalyzes the committed step in the synthesis of phosphatidylcholine by the CDP-choline pathway. Also exhibits ethanolamine kinase activity but it is a poor substrate at 14% efficiency compared with choline. In Saccharomyces cerevisiae (strain ATCC 204508 / S288c) (Baker's yeast), this protein is Choline kinase.